Here is a 359-residue protein sequence, read N- to C-terminus: E3 ubiquitin-protein ligase RNF146 (359 aa).

An RING-type zinc finger spans residues 37 to 75 (CAICLQTCVHPVSLPCKHVFCYLCVKGASWLGKRCALCR). Residues K85 and K95 each participate in a glycyl lysine isopeptide (Lys-Gly) (interchain with G-Cter in ubiquitin) cross-link. A WWE domain is found at 92-168 (EELKAASRGN…EHGRRRKIKR (77 aa)). A glycoprotein is bound by residues Y108, R111, and W115. A Glycyl lysine isopeptide (Lys-Gly) (interchain with G-Cter in ubiquitin) cross-link involves residue K131. Positions 145, 154, 164, and 176 each coordinate a glycoprotein. A Glycyl lysine isopeptide (Lys-Gly) (interchain with G-Cter in ubiquitin) cross-link involves residue K176. The disordered stretch occupies residues 254–359 (GDNTAERSHR…PDGQCTVTEV (106 aa)). Residues 284–298 (SIEETESDASSDSED) are compositionally biased toward acidic residues. Residues S290 and S294 each carry the phosphoserine modification. A compositionally biased stretch (polar residues) spans 306 to 323 (HSLTQQRLLVSNANQTVP).

As to quaternary structure, can form homooligomers. Interacts with PARsylated AXIN1, AXIN2, BLZF1, CASC3, H1-2, IPO7, LIG3, NCL, PARP1, XRCC1, XRCC5 and XRCC6. Interacts with DDB1, DHX15, IQGAP1, LRPPRC, PARP2, PRKDC, RUVBL2, TNKS1 and TNKS2. Binding often leads to interactor ubiquitination, in the presence of the appropriate E1 and E2 enzymes, and proteasomal degradation. Post-translationally, ubiquitinated; autoubiquitinated. Polyubiquitinated in the presence of UBE2D1, UBE2D2 and UBE2D3. Multimonoubiquitinated in the presence of UBE2E1. Not ubiquitinated in the presence of UBE2H, CDC34, UBE2L3, UBE2L6, nor UBE2C. In the absence of PAR, autoubiquitination occurs on Lys-85, Lys-95 and Lys-176 via 'Lys-11' and 'Lys-48' ubiquitin linkages. In the presence of PAR, Lys-131 and Lys-176 are ubiquitinated via 'Lys-6', 'Lys-33' and 'Lys-48' ubiquitin linkages. Autoubiquitination is enhanced upon PAR-binding. Ubiquitously expressed. Up-regulated in brains from patients with Alzheimer disease.

Its subcellular location is the cytoplasm. The protein localises to the cytosol. The protein resides in the nucleus. It carries out the reaction S-ubiquitinyl-[E2 ubiquitin-conjugating enzyme]-L-cysteine + [acceptor protein]-L-lysine = [E2 ubiquitin-conjugating enzyme]-L-cysteine + N(6)-ubiquitinyl-[acceptor protein]-L-lysine.. Its pathway is protein modification; protein ubiquitination. In terms of biological role, E3 ubiquitin-protein ligase that specifically binds poly-ADP-ribosylated (PARsylated) proteins and mediates their ubiquitination and subsequent degradation. May regulate many important biological processes, such as cell survival and DNA damage response. Acts as an activator of the Wnt signaling pathway by mediating the ubiquitination of PARsylated AXIN1 and AXIN2, 2 key components of the beta-catenin destruction complex. Acts in cooperation with tankyrase proteins (TNKS and TNKS2), which mediate PARsylation of target proteins AXIN1, AXIN2, BLZF1, CASC3, TNKS and TNKS2. Recognizes and binds tankyrase-dependent PARsylated proteins via its WWE domain and mediates their ubiquitination, leading to their degradation. Different ubiquitin linkage types have been observed: TNKS2 undergoes ubiquitination at 'Lys-48' and 'Lys-63', while AXIN1 is only ubiquitinated at 'Lys-48'. May regulate TNKS and TNKS2 subcellular location, preventing aggregation at a centrosomal location. Neuroprotective protein. Protects the brain against N-methyl-D-aspartate (NMDA) receptor-mediated glutamate excitotoxicity and ischemia, by interfering with PAR-induced cell death, called parthanatos. Prevents nuclear translocation of AIFM1 in a PAR-binding dependent manner. Does not affect PARP1 activation. Protects against cell death induced by DNA damaging agents, such as N-methyl-N-nitro-N-nitrosoguanidine (MNNG) and rescues cells from G1 arrest. Promotes cell survival after gamma-irradiation. Facilitates DNA repair. In Homo sapiens (Human), this protein is E3 ubiquitin-protein ligase RNF146 (RNF146).